Here is a 214-residue protein sequence, read N- to C-terminus: DELTA-actitoxin-Aeq1b (214 aa).

The signal sequence occupies residues 1-19 (MSRLIIVFIVVTMICAATA). Residues 20–35 (LSSKKSINEDEKDEKR) constitute a propeptide that is removed on maturation. The tract at residues 38–47 (AVAGAVIEGA) is plays an important role in the hemolytic activity. The tract at residues 46–65 (GATLTFNVLQTVLKALGDIS) is N-terminal region. Positions 89, 122, 140, 142, 168, 172, and 173 each coordinate phosphocholine. Positions 140 to 155 (SIPFDYNLYSNWWNVK) are trp-rich region, which is important for the binding to lipid membrane. The Cell attachment site, crucial for protein stability motif lies at 179–181 (RGD).

This sequence belongs to the actinoporin family. Sea anemone subfamily. In terms of assembly, octamer or nonamer in membranes. Monomer in the soluble state.

It localises to the secreted. It is found in the nematocyst. The protein localises to the target cell membrane. Functionally, pore-forming protein that forms cations-selective hydrophilic pores of around 1 nm and causes cytolysis. Pore formation is a multi-step process that involves specific recognition of membrane sphingomyelin (but neither cholesterol nor phosphatidylcholine) using aromatic rich region and adjacent phosphocholine (POC) binding site, firm binding to the membrane (mainly driven by hydrophobic interactions) accompanied by the transfer of the N-terminal region to the lipid-water interface and finally pore formation after oligomerization of monomers. This chain is DELTA-actitoxin-Aeq1b, found in Actinia equina (Beadlet anemone).